A 462-amino-acid chain; its full sequence is A-type ATP synthase subunit B (462 aa).

Belongs to the ATPase alpha/beta chains family. Has multiple subunits with at least A(3), B(3), C, D, E, F, H, I and proteolipid K(x).

The protein localises to the cell membrane. Its function is as follows. Component of the A-type ATP synthase that produces ATP from ADP in the presence of a proton gradient across the membrane. The B chain is a regulatory subunit. The polypeptide is A-type ATP synthase subunit B (Pyrococcus furiosus (strain ATCC 43587 / DSM 3638 / JCM 8422 / Vc1)).